The primary structure comprises 288 residues: ATP synthase gamma chain (288 aa).

The protein belongs to the ATPase gamma chain family. In terms of assembly, F-type ATPases have 2 components, CF(1) - the catalytic core - and CF(0) - the membrane proton channel. CF(1) has five subunits: alpha(3), beta(3), gamma(1), delta(1), epsilon(1). CF(0) has three main subunits: a, b and c.

The protein localises to the cell inner membrane. Functionally, produces ATP from ADP in the presence of a proton gradient across the membrane. The gamma chain is believed to be important in regulating ATPase activity and the flow of protons through the CF(0) complex. The polypeptide is ATP synthase gamma chain (Vibrio cholerae serotype O1 (strain ATCC 39541 / Classical Ogawa 395 / O395)).